The following is a 320-amino-acid chain: Dermonecrotic toxin LarSicTox-alphaIB2a (320 aa).

The signal sequence occupies residues 1-15; that stretch reads MSHSSTALLHPYVAA. A propeptide spanning residues 16–41 is cleaved from the precursor; it reads RATEKFAPIYFFCHPLQSAETDVAER. The active site involves histidine 52. 2 residues coordinate Mg(2+): glutamate 72 and aspartate 74. Histidine 88 acts as the Nucleophile in catalysis. Disulfide bonds link cysteine 92–cysteine 98 and cysteine 94–cysteine 237. Aspartate 132 is a binding site for Mg(2+). Asparagine 297 is a glycosylation site (N-linked (GlcNAc...) asparagine).

Belongs to the arthropod phospholipase D family. Class II subfamily. Requires Mg(2+) as cofactor. Expressed by the venom gland.

It is found in the secreted. It carries out the reaction an N-(acyl)-sphingosylphosphocholine = an N-(acyl)-sphingosyl-1,3-cyclic phosphate + choline. The enzyme catalyses an N-(acyl)-sphingosylphosphoethanolamine = an N-(acyl)-sphingosyl-1,3-cyclic phosphate + ethanolamine. It catalyses the reaction a 1-acyl-sn-glycero-3-phosphocholine = a 1-acyl-sn-glycero-2,3-cyclic phosphate + choline. The catalysed reaction is a 1-acyl-sn-glycero-3-phosphoethanolamine = a 1-acyl-sn-glycero-2,3-cyclic phosphate + ethanolamine. Functionally, dermonecrotic toxins cleave the phosphodiester linkage between the phosphate and headgroup of certain phospholipids (sphingolipid and lysolipid substrates), forming an alcohol (often choline) and a cyclic phosphate. This toxin acts on sphingomyelin (SM). It may also act on ceramide phosphoethanolamine (CPE), lysophosphatidylcholine (LPC) and lysophosphatidylethanolamine (LPE), but not on lysophosphatidylserine (LPS), and lysophosphatidylglycerol (LPG). It acts by transphosphatidylation, releasing exclusively cyclic phosphate products as second products. Induces dermonecrosis, hemolysis, increased vascular permeability, edema, inflammatory response, and platelet aggregation. This chain is Dermonecrotic toxin LarSicTox-alphaIB2a, found in Loxosceles arizonica (Arizona brown spider).